A 357-amino-acid polypeptide reads, in one-letter code: DNA replication and repair protein RecF (357 aa).

30-37 (GANGSGKT) is an ATP binding site.

The protein belongs to the RecF family.

The protein resides in the cytoplasm. Its function is as follows. The RecF protein is involved in DNA metabolism; it is required for DNA replication and normal SOS inducibility. RecF binds preferentially to single-stranded, linear DNA. It also seems to bind ATP. The sequence is that of DNA replication and repair protein RecF from Shigella boydii serotype 4 (strain Sb227).